Here is a 102-residue protein sequence, read N- to C-terminus: uncharacterized protein (102 aa).

This is an uncharacterized protein from Homo sapiens (Human).